We begin with the raw amino-acid sequence, 319 residues long: MTPRHLLTAADLSRDDATAILDDADRFAQALVGRDIKKLPTLRGRTVVTMFYENSTRTRVSFEVAGKWMSADVINVSAAGSSVGKGESLRDTALTLRAAGADALIIRHPASGAAHLLAQWTGAHNDGPAVINAGDGTHEHPTQALLDALTIRQRLGGIEGRRIVIVGDILHSRVARSNVMLLDTLGAEVVLVAPPTLLPVGVTGWPATVSHDFDAELPAADAVLMLRVQAERMNGGFFPSVREYSVRYGLTERRQAMLPGHAVVLHPGPMVRGMEITSSVADSSQSAVLQQVSNGVQVRMAVLFHVLVGAQDAGKEGAA.

Residues R57 and T58 each coordinate carbamoyl phosphate. K85 provides a ligand contact to L-aspartate. 3 residues coordinate carbamoyl phosphate: R107, H140, and Q143. Residues R173 and R227 each contribute to the L-aspartate site. The carbamoyl phosphate site is built by G268 and P269.

Belongs to the aspartate/ornithine carbamoyltransferase superfamily. ATCase family. As to quaternary structure, heterododecamer (2C3:3R2) of six catalytic PyrB chains organized as two trimers (C3), and six regulatory PyrI chains organized as three dimers (R2).

It carries out the reaction carbamoyl phosphate + L-aspartate = N-carbamoyl-L-aspartate + phosphate + H(+). The protein operates within pyrimidine metabolism; UMP biosynthesis via de novo pathway; (S)-dihydroorotate from bicarbonate: step 2/3. Catalyzes the condensation of carbamoyl phosphate and aspartate to form carbamoyl aspartate and inorganic phosphate, the committed step in the de novo pyrimidine nucleotide biosynthesis pathway. The chain is Aspartate carbamoyltransferase catalytic subunit from Mycobacterium tuberculosis (strain ATCC 25177 / H37Ra).